Consider the following 189-residue polypeptide: dCTP deaminase (189 aa).

DCTP contacts are provided by residues 112–117 (KSTYAR), 136–138 (TLE), Q157, Y171, and Q181. E138 serves as the catalytic Proton donor/acceptor.

Belongs to the dCTP deaminase family. In terms of assembly, homotrimer.

It carries out the reaction dCTP + H2O + H(+) = dUTP + NH4(+). It functions in the pathway pyrimidine metabolism; dUMP biosynthesis; dUMP from dCTP (dUTP route): step 1/2. In terms of biological role, catalyzes the deamination of dCTP to dUTP. The chain is dCTP deaminase from Methylacidiphilum infernorum (isolate V4) (Methylokorus infernorum (strain V4)).